Reading from the N-terminus, the 133-residue chain is Small ribosomal subunit protein uS11 (133 aa).

The protein belongs to the universal ribosomal protein uS11 family. Part of the 30S ribosomal subunit. Interacts with proteins S7 and S18. Binds to IF-3.

Functionally, located on the platform of the 30S subunit, it bridges several disparate RNA helices of the 16S rRNA. Forms part of the Shine-Dalgarno cleft in the 70S ribosome. The polypeptide is Small ribosomal subunit protein uS11 (Cupriavidus metallidurans (strain ATCC 43123 / DSM 2839 / NBRC 102507 / CH34) (Ralstonia metallidurans)).